A 362-amino-acid chain; its full sequence is Heat-inducible transcription repressor HrcA (362 aa).

Belongs to the HrcA family.

Functionally, negative regulator of class I heat shock genes (grpE-dnaK-dnaJ and groELS operons). Prevents heat-shock induction of these operons. This Rhizobium etli (strain CIAT 652) protein is Heat-inducible transcription repressor HrcA.